Consider the following 104-residue polypeptide: Large ribosomal subunit protein uL24 (104 aa).

Belongs to the universal ribosomal protein uL24 family. Part of the 50S ribosomal subunit.

Its function is as follows. One of two assembly initiator proteins, it binds directly to the 5'-end of the 23S rRNA, where it nucleates assembly of the 50S subunit. In terms of biological role, one of the proteins that surrounds the polypeptide exit tunnel on the outside of the subunit. In Brevibacillus brevis (strain 47 / JCM 6285 / NBRC 100599), this protein is Large ribosomal subunit protein uL24.